A 354-amino-acid polypeptide reads, in one-letter code: Glucose 1-dehydrogenase (354 aa).

The segment at 1–27 is disordered; that stretch reads MKVIGVTRDDDGPQLLERERPSPDPGE. Residues 7–22 are compositionally biased toward basic and acidic residues; sequence TRDDDGPQLLERERPS. Asp-38 is a binding site for Zn(2+). Thr-40 contacts substrate. Positions 63 and 64 each coordinate Zn(2+). Positions 91–110 are disordered; it reads PNGETNEYFRRGEPDMAPDG. 2 residues coordinate substrate: Glu-114 and Glu-150. Glu-150 is a Zn(2+) binding site. NADP(+) is bound by residues 181–184, 204–205, 269–271, and 298–300; these read NGSL, RR, LGI, and TVN. Position 300 (Asn-300) interacts with substrate.

This sequence belongs to the zinc-containing alcohol dehydrogenase family. Glucose 1-dehydrogenase subfamily. Requires Zn(2+) as cofactor.

The catalysed reaction is D-glucose + NAD(+) = D-glucono-1,5-lactone + NADH + H(+). It carries out the reaction D-glucose + NADP(+) = D-glucono-1,5-lactone + NADPH + H(+). In terms of biological role, catalyzes the NAD(P)(+)-dependent oxidation of D-glucose to D-gluconate via gluconolactone. Can utilize both NAD(+) and NADP(+) as electron acceptor. Is involved in the degradation of glucose through a modified Entner-Doudoroff pathway. In Haloarcula marismortui (strain ATCC 43049 / DSM 3752 / JCM 8966 / VKM B-1809) (Halobacterium marismortui), this protein is Glucose 1-dehydrogenase.